We begin with the raw amino-acid sequence, 158 residues long: NADH-quinone oxidoreductase subunit B (158 aa).

The [4Fe-4S] cluster site is built by cysteine 37, cysteine 38, cysteine 102, and cysteine 132.

Belongs to the complex I 20 kDa subunit family. As to quaternary structure, NDH-1 is composed of 14 different subunits. Subunits NuoB, C, D, E, F, and G constitute the peripheral sector of the complex. [4Fe-4S] cluster is required as a cofactor.

The protein localises to the cell inner membrane. The enzyme catalyses a quinone + NADH + 5 H(+)(in) = a quinol + NAD(+) + 4 H(+)(out). Its function is as follows. NDH-1 shuttles electrons from NADH, via FMN and iron-sulfur (Fe-S) centers, to quinones in the respiratory chain. Couples the redox reaction to proton translocation (for every two electrons transferred, four hydrogen ions are translocated across the cytoplasmic membrane), and thus conserves the redox energy in a proton gradient. This chain is NADH-quinone oxidoreductase subunit B, found in Methylobacillus flagellatus (strain ATCC 51484 / DSM 6875 / VKM B-1610 / KT).